The primary structure comprises 541 residues: Effector protein hopAB1 (541 aa).

3 disordered regions span residues 1-94 (MPGI…EAQQ), 168-222 (QRAL…RHPQ), and 317-338 (RQTT…SGRR). Residues 18–31 (TDGEPVTEREHDSS) are compositionally biased toward basic and acidic residues. Residues 183–196 (SSSGSSQRSLIGRS) show a composition bias toward low complexity.

Belongs to the HopAB family.

The protein resides in the secreted. Effector protein that plays different roles depending on the species and plant cultivars that interact with the pathogen. Acts as a virulence determinant by enhancing the development of disease symptoms and bacterial growth. Acts as an avirulence factor by eliciting hypersensitive response (HR) and plant resistance. The protein is Effector protein hopAB1 (hopAB1) of Pseudomonas savastanoi (Pseudomonas syringae pv. savastanoi).